The primary structure comprises 97 residues: Putative pterin-4-alpha-carbinolamine dehydratase (97 aa).

Belongs to the pterin-4-alpha-carbinolamine dehydratase family.

The catalysed reaction is (4aS,6R)-4a-hydroxy-L-erythro-5,6,7,8-tetrahydrobiopterin = (6R)-L-erythro-6,7-dihydrobiopterin + H2O. The polypeptide is Putative pterin-4-alpha-carbinolamine dehydratase (Saccharolobus solfataricus (strain ATCC 35092 / DSM 1617 / JCM 11322 / P2) (Sulfolobus solfataricus)).